We begin with the raw amino-acid sequence, 870 residues long: Aldehyde-alcohol dehydrogenase 2 (870 aa).

Residue C252 is part of the active site. NAD(+) is bound at residue G431–G436.

This sequence in the N-terminal section; belongs to the aldehyde dehydrogenase family. In the C-terminal section; belongs to the iron-containing alcohol dehydrogenase family. In terms of assembly, seems to form a rod shaped homomer composed of at least 20 identical subunits. Zn(2+) serves as cofactor. It depends on Fe(2+) as a cofactor.

It catalyses the reaction a primary alcohol + NAD(+) = an aldehyde + NADH + H(+). It carries out the reaction a secondary alcohol + NAD(+) = a ketone + NADH + H(+). The catalysed reaction is acetaldehyde + NAD(+) + CoA = acetyl-CoA + NADH + H(+). In terms of biological role, this enzyme has two NAD(+)-dependent activities: ADH and ACDH. May be a critical enzyme in the fermentative pathway. The protein is Aldehyde-alcohol dehydrogenase 2 (ADH2) of Entamoeba histolytica (strain ATCC 30459 / HM-1:IMSS / ABRM).